A 195-amino-acid chain; its full sequence is MAREAMIARTTNETSIQLSLSLDGEGKAELETGVPFLTHMLDLFAKHGQFDLHIEAKGDTHIDDHHTTEDIGICLGQAIKEALGDKKGIKRYGNAFVPMDDALAQVVIDLSNRPHFEFRGEFPAAKVGAFDVELVHEFLWKLALEARMNLHVIVHYGRNTHHMVEAVFKALGRALDEATMIDPRVKGVPSTKGML.

This sequence belongs to the imidazoleglycerol-phosphate dehydratase family.

Its subcellular location is the cytoplasm. It carries out the reaction D-erythro-1-(imidazol-4-yl)glycerol 3-phosphate = 3-(imidazol-4-yl)-2-oxopropyl phosphate + H2O. It participates in amino-acid biosynthesis; L-histidine biosynthesis; L-histidine from 5-phospho-alpha-D-ribose 1-diphosphate: step 6/9. The protein is Imidazoleglycerol-phosphate dehydratase of Geobacillus kaustophilus (strain HTA426).